Consider the following 340-residue polypeptide: MSLAAKLIIYNYYAKYNEVHDVYGESYHHYRIVQEYLSESYVNGMSCIERDVTAMRRLKSGSCTFDEAVKMIDAGDSIKSLSHWFSTSETMGIDDNVREVLEQIDAVVPVSVRVQNGWQIFSLNNFEREISQDMLDCLQIILGRFEYFMRNGKLLRIANVFNPNNDVVGWWYNKFCVVTYVHRIMYRSVPAELVPRLSEAVKKFIRLRKSDYDDRLHVDESYNCPRVIAEMYGRFCGIGKEHFSKHKLSCMHILFQYLRGKTTQEEKSFPCYRVIKDFGRQCKDVYKNLKDVFDLLHAHSMSDKDKNSLMDLLCVMDCEEIDVDCFYYIFESFLNNKHLQ.

In terms of biological role, plays an essential role in nucleocapsid egress from the host nucleus to form the budded virion (BV). Does not participate in nucleocapsid formation. The protein is Protein AC11 of Autographa californica nuclear polyhedrosis virus (AcMNPV).